The following is a 46-amino-acid chain: Major cold-shock protein (46 aa).

Residues 1–46 (EKGFGFISPADGSKDVFVHFSAIQSTSFKTLDEGQRVEFTIEQGQK) form the CSD domain.

As to quaternary structure, homodimer.

It is found in the cytoplasm. The polypeptide is Major cold-shock protein (cspA) (Aeromonas salmonicida).